The following is a 444-amino-acid chain: 3-isopropylmalate dehydratase large subunit (444 aa).

[4Fe-4S] cluster contacts are provided by Cys348, Cys408, and Cys411.

It belongs to the aconitase/IPM isomerase family. LeuC type 1 subfamily. As to quaternary structure, heterodimer of LeuC and LeuD. [4Fe-4S] cluster is required as a cofactor.

The catalysed reaction is (2R,3S)-3-isopropylmalate = (2S)-2-isopropylmalate. Its pathway is amino-acid biosynthesis; L-leucine biosynthesis; L-leucine from 3-methyl-2-oxobutanoate: step 2/4. Its function is as follows. Catalyzes the isomerization between 2-isopropylmalate and 3-isopropylmalate, via the formation of 2-isopropylmaleate. This Buchnera aphidicola subsp. Uroleucon ambrosiae protein is 3-isopropylmalate dehydratase large subunit.